The following is a 475-amino-acid chain: Polyphosphate:AMP phosphotransferase (475 aa).

PPK2 regions lie at residues 18–222 and 256–472; these read LDLI…LTAL and ANYK…KADR.

Belongs to the polyphosphate kinase 2 (PPK2) family. Class II subfamily. As to quaternary structure, homodimer and homotetramer. The cofactor is Mg(2+).

The catalysed reaction is [phosphate](n) + ADP = [phosphate](n+1) + AMP. Its function is as follows. Uses inorganic polyphosphate (polyP) as a donor to convert AMP to ADP. Can also use GMP, UMP, CMP, TMP or deoxyribonucleoside monophosphates, with lower efficiency. Cannot use low-molecular weight polyP as donors. Can also catalyze the synthesis of polyP from ADP or GDP, with lower efficiency. This Acinetobacter johnsonii protein is Polyphosphate:AMP phosphotransferase.